The chain runs to 562 residues: Glutamine--tRNA ligase (562 aa).

A 'HIGH' region motif is present at residues 35 to 45 (PEPNGYLHIGH). Residues 36–38 (EPN) and 42–48 (HIGHAKS) each bind ATP. Residues Asp68 and Tyr213 each coordinate L-glutamine. ATP contacts are provided by residues Thr232 and 264–265 (RL). The short motif at 271–275 (ITSKR) is the 'KMSKS' region element.

The protein belongs to the class-I aminoacyl-tRNA synthetase family. Monomer.

It is found in the cytoplasm. It catalyses the reaction tRNA(Gln) + L-glutamine + ATP = L-glutaminyl-tRNA(Gln) + AMP + diphosphate. The polypeptide is Glutamine--tRNA ligase (Neisseria meningitidis serogroup A / serotype 4A (strain DSM 15465 / Z2491)).